A 312-amino-acid polypeptide reads, in one-letter code: Protease HtpX homolog (312 aa).

Helical transmembrane passes span 6-26 (TAVL…AIGG) and 28-48 (GGMM…YWYA). Zn(2+) is bound at residue His-130. Glu-131 is an active-site residue. His-134 serves as a coordination point for Zn(2+). The next 2 membrane-spanning stretches (helical) occupy residues 145-165 (ITAS…FFGG) and 173-193 (PFGG…AMVV). Position 202 (Glu-202) interacts with Zn(2+). Residues 287-297 (PAPARAAPARG) are compositionally biased toward low complexity. The interval 287–312 (PAPARAAPARGPWGGNTGGTRRGPWG) is disordered. The span at 298–312 (PWGGNTGGTRRGPWG) shows a compositional bias: gly residues.

The protein belongs to the peptidase M48B family. Requires Zn(2+) as cofactor.

Its subcellular location is the cell inner membrane. The sequence is that of Protease HtpX homolog from Azorhizobium caulinodans (strain ATCC 43989 / DSM 5975 / JCM 20966 / LMG 6465 / NBRC 14845 / NCIMB 13405 / ORS 571).